A 297-amino-acid chain; its full sequence is Probable endonuclease 4 (297 aa).

The Zn(2+) site is built by H69, H110, E145, D179, H182, H214, D227, H229, and E259.

Belongs to the AP endonuclease 2 family. Zn(2+) is required as a cofactor.

The catalysed reaction is Endonucleolytic cleavage to 5'-phosphooligonucleotide end-products.. Endonuclease IV plays a role in DNA repair. It cleaves phosphodiester bonds at apurinic or apyrimidinic (AP) sites, generating a 3'-hydroxyl group and a 5'-terminal sugar phosphate. The polypeptide is Probable endonuclease 4 (Listeria welshimeri serovar 6b (strain ATCC 35897 / DSM 20650 / CCUG 15529 / CIP 8149 / NCTC 11857 / SLCC 5334 / V8)).